The primary structure comprises 114 residues: MASSMLGFLLLLLLLMAAHPGPSEAQHWSHGWYPGGKRASNSPQDPQSALRPPAPSAAQTAHSFRSAALASPEDSVPWEGRTTAGWSLRRKQHLMRTLLSAAGAPRPAAVPIKP.

A signal peptide spans 1–25 (MASSMLGFLLLLLLLMAAHPGPSEA). Residues 22–80 (PSEAQHWSHGWYPGGKRASNSPQDPQSALRPPAPSAAQTAHSFRSAALASPEDSVPWEG) form a disordered region. A Glycine amide modification is found at glycine 35.

The protein belongs to the GnRH family. Midbrain.

The protein localises to the secreted. In terms of biological role, stimulates the secretion of gonadotropins; it stimulates the secretion of both luteinizing and follicle-stimulating hormones. The chain is Progonadoliberin-2 (GNRH2) from Tupaia belangeri (Common tree shrew).